The sequence spans 182 residues: Large ribosomal subunit protein uL5c (182 aa).

Belongs to the universal ribosomal protein uL5 family. As to quaternary structure, part of the 50S ribosomal subunit; contacts the 5S rRNA.

Its subcellular location is the plastid. It is found in the chloroplast. Functionally, binds 5S rRNA, forms part of the central protuberance of the 50S subunit. This is Large ribosomal subunit protein uL5c (rpl5) from Emiliania huxleyi (Coccolithophore).